We begin with the raw amino-acid sequence, 129 residues long: Ergosterol biosynthetic protein 28 (129 aa).

4 helical membrane passes run 4–24 (LGYWLMVVGSLRLASVWFGFF), 46–66 (TFGVWTLLTCTLCFLCAFNLE), 71–91 (YLATFLSFIYALGHFLTEYLF), and 96–116 (TIANLSTVGFFAGTSIVWMLL).

It belongs to the ERG28 family.

It localises to the endoplasmic reticulum membrane. This Arabidopsis thaliana (Mouse-ear cress) protein is Ergosterol biosynthetic protein 28.